A 378-amino-acid polypeptide reads, in one-letter code: Cobalt-precorrin-5B C(1)-methyltransferase (378 aa).

It belongs to the CbiD family.

It carries out the reaction Co-precorrin-5B + S-adenosyl-L-methionine = Co-precorrin-6A + S-adenosyl-L-homocysteine. Its pathway is cofactor biosynthesis; adenosylcobalamin biosynthesis; cob(II)yrinate a,c-diamide from sirohydrochlorin (anaerobic route): step 6/10. In terms of biological role, catalyzes the methylation of C-1 in cobalt-precorrin-5B to form cobalt-precorrin-6A. The polypeptide is Cobalt-precorrin-5B C(1)-methyltransferase (Methanococcus aeolicus (strain ATCC BAA-1280 / DSM 17508 / OCM 812 / Nankai-3)).